Reading from the N-terminus, the 766-residue chain is Exocyst complex component 6 (766 aa).

A coiled-coil region spans residues N28–S90.

This sequence belongs to the SEC15 family. As to quaternary structure, the exocyst complex is composed of Sec3/Exoc1, Sec5/Exoc2, Sec6/Exoc3, Sec8/Exoc4, Sec10/Exoc5, Sec15/Exoc6, Exo70/Exoc7 and Exo84/Exoc8. Interacts with RAB3, RAB8, RAB11 and RAB27. Detected in developing rhabdomeres in photoreceptor cells.

It localises to the cell projection. Its subcellular location is the rhabdomere. Functionally, component of the exocyst complex involved in the docking of exocytic vesicles with fusion sites on the plasma membrane. The chain is Exocyst complex component 6 from Drosophila melanogaster (Fruit fly).